The sequence spans 53 residues: MIFNSLINIINKSSPSSLNNNNNINSKSLQINSENKSKIQNNNPLGNKGGVQF.

A compositionally biased stretch (low complexity) spans 14–33; the sequence is SPSSLNNNNNINSKSLQINS. A disordered region spans residues 14–53; sequence SPSSLNNNNNINSKSLQINSENKSKIQNNNPLGNKGGVQF.

This is an uncharacterized protein from Dictyostelium discoideum (Social amoeba).